The sequence spans 71 residues: Small ribosomal subunit protein bS21 (71 aa).

The segment covering Lys-48–Leu-60 has biased composition (basic residues). Residues Lys-48–Tyr-71 form a disordered region. Residues Gln-61–Tyr-71 show a composition bias toward basic and acidic residues.

The protein belongs to the bacterial ribosomal protein bS21 family.

In Psychrobacter sp. (strain PRwf-1), this protein is Small ribosomal subunit protein bS21.